Consider the following 403-residue polypeptide: Peroxisomal membrane protein PEX13 (403 aa).

Residues 1 to 11 are compositionally biased toward pro residues; that stretch reads MASQPPPPPKP. Positions 1-69 are disordered; it reads MASQPPPPPK…SQQTGGNNVN (69 aa). The Peroxisomal matrix segment spans residues 1 to 134; that stretch reads MASQPPPPPK…SSRGAFQSIE (134 aa). Residues 59 to 69 are compositionally biased toward polar residues; sequence PSQQTGGNNVN. A helical membrane pass occupies residues 135–155; it reads SIVHAFASVSMMMDATFSAVY. Residues 145 to 233 form a targeting to peroxisomes region; sequence MMMDATFSAV…EDQANNSAKS (89 aa). Over 156–174 the chain is Cytoplasmic; the sequence is NSFRAVLDVANHFSRLKIH. The helical transmembrane segment at 175-192 threads the bilayer; sequence FTKVFSAFALVRTIRYLY. The segment at 175–196 is interaction with PEX19; the sequence is FTKVFSAFALVRTIRYLYRRLQ. Residues 193 to 233 are Peroxisomal matrix-facing; that stretch reads RRLQWMMGLRRGSENEDLWAESEGTVACLGAEDQANNSAKS. A helical membrane pass occupies residues 234–254; that stretch reads WPIFLFFAVILGGPYLIWKLL. Residues 255-403 lie on the Cytoplasmic side of the membrane; that stretch reads STHSDEVTDS…TGKNGDKQDL (149 aa). One can recognise an SH3 domain in the interval 272–336; the sequence is DDHVVARAEY…PANYVKILGK (65 aa). Disordered regions lie at residues 341 to 364 and 381 to 403; these read KTVE…VKGV and FVET…KQDL. Over residues 344-364 the composition is skewed to polar residues; sequence ESSTMPKQQQSFTNPTSVKGV.

This sequence belongs to the peroxin-13 family. In terms of assembly, interacts (via SH3 domain) with PEX14 (via SH3-binding motif); forming the PEX13-PEX14 docking complex. Interacts with PEX19.

It localises to the peroxisome membrane. In terms of biological role, component of the PEX13-PEX14 docking complex, a translocon channel that specifically mediates the import of peroxisomal cargo proteins bound to PEX5 receptor. The PEX13-PEX14 docking complex forms a large import pore which can be opened to a diameter of about 9 nm. Mechanistically, PEX5 receptor along with cargo proteins associates with the PEX14 subunit of the PEX13-PEX14 docking complex in the cytosol, leading to the insertion of the receptor into the organelle membrane with the concomitant translocation of the cargo into the peroxisome matrix. Involved in the import of PTS1- and PTS2-type containing proteins. The chain is Peroxisomal membrane protein PEX13 from Rattus norvegicus (Rat).